A 426-amino-acid chain; its full sequence is Serine--tRNA ligase (426 aa).

L-serine is bound at residue 233–235 (TSE). Residue 264–266 (RSE) coordinates ATP. Glu-287 contributes to the L-serine binding site. 351–354 (EISS) contacts ATP. An L-serine-binding site is contributed by Ser-387.

The protein belongs to the class-II aminoacyl-tRNA synthetase family. Type-1 seryl-tRNA synthetase subfamily. As to quaternary structure, homodimer. The tRNA molecule binds across the dimer.

The protein localises to the cytoplasm. It carries out the reaction tRNA(Ser) + L-serine + ATP = L-seryl-tRNA(Ser) + AMP + diphosphate + H(+). The enzyme catalyses tRNA(Sec) + L-serine + ATP = L-seryl-tRNA(Sec) + AMP + diphosphate + H(+). The protein operates within aminoacyl-tRNA biosynthesis; selenocysteinyl-tRNA(Sec) biosynthesis; L-seryl-tRNA(Sec) from L-serine and tRNA(Sec): step 1/1. Functionally, catalyzes the attachment of serine to tRNA(Ser). Is also able to aminoacylate tRNA(Sec) with serine, to form the misacylated tRNA L-seryl-tRNA(Sec), which will be further converted into selenocysteinyl-tRNA(Sec). The chain is Serine--tRNA ligase from Xylella fastidiosa (strain M23).